A 466-amino-acid chain; its full sequence is Tissue alpha-L-fucosidase (466 aa).

Residues 1–31 (MRAPGMRSRPAGPALLLLLLFLGAAESVRRA) form the signal peptide. Residue T170 is modified to Phosphothreonine. N-linked (GlcNAc...) asparagine glycosylation is found at N241, N268, and N382.

The protein belongs to the glycosyl hydrolase 29 family. Homotetramer.

Its subcellular location is the lysosome. It catalyses the reaction an alpha-L-fucoside + H2O = L-fucose + an alcohol. It carries out the reaction a neolactoside IV(2)-alpha-Fuc-nLc4Cer(d18:1(4E)) + H2O = a neolactoside nLc4Cer(d18:1(4E)) + L-fucose. The catalysed reaction is a neolactoside IV(2)-alpha-Fuc-nLc4Cer(d18:0) + H2O = a neolactoside nLc4Cer(d18:0) + L-fucose. Its function is as follows. Alpha-L-fucosidase is responsible for hydrolyzing the alpha-1,6-linked fucose joined to the reducing-end N-acetylglucosamine of the carbohydrate moieties of glycoproteins. The protein is Tissue alpha-L-fucosidase of Homo sapiens (Human).